The sequence spans 611 residues: Alpha-1,2-mannosyltransferase ALG9 (611 aa).

Basic residues predominate over residues 1–10; it reads MASRGARQRL. Residues 1–23 form a disordered region; the sequence is MASRGARQRLKGSGASSGDTAPA. Residues 1–135 are Lumenal-facing; the sequence is MASRGARQRL…FHARILQTNK (135 aa). N-linked (GlcNAc...) asparagine glycosylation occurs at N77. Residues 136 to 156 form a helical membrane-spanning segment; it reads ILVFYFLRCLLAFVSCICELY. The Cytoplasmic segment spans residues 157–171; the sequence is FYKAVCKKFGLHVSR. The helical transmembrane segment at 172-192 threads the bilayer; sequence MMLAFLVLSTGMFCSSSAFLP. Over 193–213 the chain is Lumenal; it reads SSFCMYTTLIAMTGWYMDKTS. The helical transmembrane segment at 214–234 threads the bilayer; the sequence is IAVLGVAAGAILGWPFSAALG. Over 235–249 the chain is Cytoplasmic; it reads LPIAFDLLVMKHRWK. A helical membrane pass occupies residues 250 to 270; sequence SFFHWSLMALILFLVPVVVID. The Lumenal portion of the chain corresponds to 271–304; that stretch reads SYYYGKLVIAPLNIVLYNVFTPHGPDLYGTEPWY. The chain crosses the membrane as a helical span at residues 305 to 325; that stretch reads FYLINGFLNFNVAFALALLVL. Topologically, residues 326-342 are cytoplasmic; it reads PLTSLMEYLLQRFHVQN. The helical transmembrane segment at 343 to 363 threads the bilayer; the sequence is LGHPYWLTLAPMYIWFIIFFI. At 364–370 the chain is on the lumenal side; it reads QPHKEER. A helical membrane pass occupies residues 371–391; sequence FLFPVYPLICLCGAVALSALQ. Residues 392-405 are Cytoplasmic-facing; it reads KCYHFVFQRYRLEH. A helical transmembrane segment spans residues 406 to 426; sequence YTVTSNWLALGTVFLFGLLSF. Residues 427 to 611 lie on the Lumenal side of the membrane; it reads SRSVALFRGY…AKQIRKKSGG (185 aa). N593 carries an N-linked (GlcNAc...) asparagine glycan.

It belongs to the glycosyltransferase 22 family. As to expression, ubiquitously expressed; with highest levels in heart, liver and pancreas.

The protein resides in the endoplasmic reticulum membrane. The catalysed reaction is an alpha-D-Man-(1-&gt;2)-alpha-D-Man-(1-&gt;2)-alpha-D-Man-(1-&gt;3)-[alpha-D-Man-(1-&gt;3)-alpha-D-Man-(1-&gt;6)]-beta-D-Man-(1-&gt;4)-beta-D-GlcNAc-(1-&gt;4)-alpha-D-GlcNAc-diphospho-di-trans,poly-cis-dolichol + a di-trans,poly-cis-dolichyl beta-D-mannosyl phosphate = an alpha-D-Man-(1-&gt;2)-alpha-D-Man-(1-&gt;2)-alpha-D-Man-(1-&gt;3)-[alpha-D-Man-(1-&gt;2)-alpha-D-Man-(1-&gt;3)-alpha-D-Man-(1-&gt;6)]-beta-D-Man-(1-&gt;4)-beta-D-GlcNAc-(1-&gt;4)-alpha-D-GlcNAc-diphospho-di-trans,poly-cis-dolichol + a di-trans,poly-cis-dolichyl phosphate + H(+). The enzyme catalyses an alpha-D-Man-(1-&gt;2)-alpha-D-Man-(1-&gt;2)-alpha-D-Man-(1-&gt;3)-[alpha-D-Man-(1-&gt;2)-alpha-D-Man-(1-&gt;3)-[alpha-D-Man-(1-&gt;6)]-alpha-D-Man-(1-&gt;6)]-beta-D-Man-(1-&gt;4)-beta-D-GlcNAc-(1-&gt;4)-alpha-D-GlcNAc-diphospho-di-trans,poly-cis-dolichol + a di-trans,poly-cis-dolichyl beta-D-mannosyl phosphate = an alpha-D-Man-(1-&gt;2)-alpha-D-Man-(1-&gt;2)-alpha-D-Man-(1-&gt;3)-[alpha-D-Man-(1-&gt;2)-alpha-D-Man-(1-&gt;3)-[alpha-D-Man-(1-&gt;2)-alpha-D-Man-(1-&gt;6)]-alpha-D-Man-(1-&gt;6)]-beta-D-Man-(1-&gt;4)-beta-D-GlcNAc-(1-&gt;4)-alpha-D-GlcNAc-diphospho-di-trans,poly-cis-dolichol + a di-trans,poly-cis-dolichyl phosphate + H(+). Its pathway is protein modification; protein glycosylation. Functionally, mannosyltransferase that operates in the biosynthetic pathway of dolichol-linked oligosaccharides, the glycan precursors employed in protein asparagine (N)-glycosylation. The assembly of dolichol-linked oligosaccharides begins on the cytosolic side of the endoplasmic reticulum membrane and finishes in its lumen. The sequential addition of sugars to dolichol pyrophosphate produces dolichol-linked oligosaccharides containing fourteen sugars, including two GlcNAcs, nine mannoses and three glucoses. Once assembled, the oligosaccharide is transferred from the lipid to nascent proteins by oligosaccharyltransferases. In the lumen of the endoplasmic reticulum, catalyzes the addition of the seventh and ninth alpha-1,2-linked mannose residues to Man(6)GlcNAc(2)-PP-dolichol and Man(8)GlcNAc(2)-PP-dolichol respectively. In Homo sapiens (Human), this protein is Alpha-1,2-mannosyltransferase ALG9.